Reading from the N-terminus, the 426-residue chain is UPF0229 protein Csal_0882 (426 aa).

Positions 82–93 (FVEGDRLRRPGG) are enriched in basic and acidic residues. The disordered stretch occupies residues 82 to 109 (FVEGDRLRRPGGEGRGGSGEGSASNQGE).

It belongs to the UPF0229 family.

The protein is UPF0229 protein Csal_0882 of Chromohalobacter salexigens (strain ATCC BAA-138 / DSM 3043 / CIP 106854 / NCIMB 13768 / 1H11).